Here is a 134-residue protein sequence, read N- to C-terminus: Small ribosomal subunit protein bS16 (134 aa).

The segment at 79 to 134 is disordered; it reads AGIAKRPSRNNPTKGEPGKKAQERLALAKQAEEEAAAKAAEAAAAAAAPAEEAASE. Residues 115-134 show a composition bias toward low complexity; the sequence is AKAAEAAAAAAAPAEEAASE.

Belongs to the bacterial ribosomal protein bS16 family.

This Brucella canis (strain ATCC 23365 / NCTC 10854 / RM-666) protein is Small ribosomal subunit protein bS16.